The sequence spans 182 residues: Adenine phosphoribosyltransferase (182 aa).

The protein belongs to the purine/pyrimidine phosphoribosyltransferase family. In terms of assembly, homodimer.

It is found in the cytoplasm. It catalyses the reaction AMP + diphosphate = 5-phospho-alpha-D-ribose 1-diphosphate + adenine. It functions in the pathway purine metabolism; AMP biosynthesis via salvage pathway; AMP from adenine: step 1/1. Functionally, catalyzes a salvage reaction resulting in the formation of AMP, that is energically less costly than de novo synthesis. The sequence is that of Adenine phosphoribosyltransferase from Campylobacter fetus subsp. fetus (strain 82-40).